A 245-amino-acid chain; its full sequence is Ribosomal RNA large subunit methyltransferase E (245 aa).

The segment at 1 to 26 (MTKPPVGSNRSGRKLGQKVKKGKLKA) is disordered. Basic residues predominate over residues 11 to 26 (SGRKLGQKVKKGKLKA). S-adenosyl-L-methionine contacts are provided by glycine 81, tryptophan 83, aspartate 104, aspartate 120, and aspartate 144. Lysine 184 serves as the catalytic Proton acceptor.

It belongs to the class I-like SAM-binding methyltransferase superfamily. RNA methyltransferase RlmE family.

The protein localises to the cytoplasm. The enzyme catalyses uridine(2552) in 23S rRNA + S-adenosyl-L-methionine = 2'-O-methyluridine(2552) in 23S rRNA + S-adenosyl-L-homocysteine + H(+). Specifically methylates the uridine in position 2552 of 23S rRNA at the 2'-O position of the ribose in the fully assembled 50S ribosomal subunit. This is Ribosomal RNA large subunit methyltransferase E from Sinorhizobium medicae (strain WSM419) (Ensifer medicae).